Here is a 308-residue protein sequence, read N- to C-terminus: Ribosomal RNA small subunit methyltransferase H (308 aa).

S-adenosyl-L-methionine is bound by residues 38–40 (GGH), D58, F82, D99, and Q106.

It belongs to the methyltransferase superfamily. RsmH family.

Its subcellular location is the cytoplasm. The enzyme catalyses cytidine(1402) in 16S rRNA + S-adenosyl-L-methionine = N(4)-methylcytidine(1402) in 16S rRNA + S-adenosyl-L-homocysteine + H(+). Specifically methylates the N4 position of cytidine in position 1402 (C1402) of 16S rRNA. The chain is Ribosomal RNA small subunit methyltransferase H from Acidovorax ebreus (strain TPSY) (Diaphorobacter sp. (strain TPSY)).